A 235-amino-acid chain; its full sequence is Hydroxyacylglutathione hydrolase (235 aa).

Positions 53, 55, 57, 58, 109, 127, and 165 each coordinate Zn(2+).

The protein belongs to the metallo-beta-lactamase superfamily. Glyoxalase II family. Monomer. Requires Zn(2+) as cofactor.

The enzyme catalyses an S-(2-hydroxyacyl)glutathione + H2O = a 2-hydroxy carboxylate + glutathione + H(+). Its pathway is secondary metabolite metabolism; methylglyoxal degradation; (R)-lactate from methylglyoxal: step 2/2. Its function is as follows. Thiolesterase that catalyzes the hydrolysis of S-D-lactoyl-glutathione to form glutathione and D-lactic acid. The polypeptide is Hydroxyacylglutathione hydrolase (Actinobacillus pleuropneumoniae serotype 5b (strain L20)).